The following is an 832-amino-acid chain: tRNA ligase (832 aa).

Lysine 108 functions as the N6-AMP-lysine intermediate in the catalytic mechanism.

It belongs to the TRL1 family.

It carries out the reaction ATP + (ribonucleotide)n-3'-hydroxyl + 5'-phospho-(ribonucleotide)m = (ribonucleotide)n+m + AMP + diphosphate.. In terms of biological role, one of the two proteins required for the splicing of precursor tRNA molecules containing introns. The ligation activity requires three enzymatic activities: phosphorylation of the 5' terminus of the 3' half-tRNA in the presence of ATP, opening of the 2'3'-cyclic phosphodiester bond of the 5' half-tRNA leaving a 2'-phosphomonoester and ligation of the two tRNA halves in an ATP-dependent reaction. The chain is tRNA ligase (LIG1) from Candida albicans (strain SC5314 / ATCC MYA-2876) (Yeast).